The sequence spans 93 residues: Toxin RelE1 (93 aa).

It belongs to the RelE toxin family.

Its function is as follows. Toxic component of a type II toxin-antitoxin (TA) system. Its toxic effect is neutralized by coexpression with cognate antitoxin RelB1 but no other ParD or RelB antitoxin. The protein is Toxin RelE1 (relE1) of Caulobacter vibrioides (strain ATCC 19089 / CIP 103742 / CB 15) (Caulobacter crescentus).